Consider the following 137-residue polypeptide: SLFAAAGLAAAAPLESRQDTASCPVSTQGDYVWKISEFYGRKPEGTYYNSLGFNIKATNGGTLDFTCSAQADKLEDHKWYSCGENSFMDFSFDSDRSGLLLKQKVSDDITYVATTTLPNYCRAGGNGPKDFVCQGVS.

The first 11 residues, serine 1 to alanine 11, serve as a signal peptide directing secretion. In terms of domain architecture, AA1-like spans glutamine 28 to serine 137. Disulfide bonds link cysteine 67–cysteine 82 and cysteine 121–cysteine 133.

It belongs to the ALTA1 family. Homodimer; disulfide-linked.

The protein resides in the secreted. The sequence is that of Allergen Ulo b 1 from Alternaria botrytis (Ulocladium botrytis).